Here is an 89-residue protein sequence, read N- to C-terminus: Small ribosomal subunit protein uS15 (89 aa).

This sequence belongs to the universal ribosomal protein uS15 family. In terms of assembly, part of the 30S ribosomal subunit. Forms a bridge to the 50S subunit in the 70S ribosome, contacting the 23S rRNA.

Functionally, one of the primary rRNA binding proteins, it binds directly to 16S rRNA where it helps nucleate assembly of the platform of the 30S subunit by binding and bridging several RNA helices of the 16S rRNA. Forms an intersubunit bridge (bridge B4) with the 23S rRNA of the 50S subunit in the ribosome. In Mycolicibacterium smegmatis (strain ATCC 700084 / mc(2)155) (Mycobacterium smegmatis), this protein is Small ribosomal subunit protein uS15.